A 272-amino-acid polypeptide reads, in one-letter code: Acyl-[acyl-carrier-protein]--UDP-N-acetylglucosamine O-acyltransferase (272 aa).

The protein belongs to the transferase hexapeptide repeat family. LpxA subfamily. In terms of assembly, homotrimer.

The protein localises to the cytoplasm. It catalyses the reaction a (3R)-hydroxyacyl-[ACP] + UDP-N-acetyl-alpha-D-glucosamine = a UDP-3-O-[(3R)-3-hydroxyacyl]-N-acetyl-alpha-D-glucosamine + holo-[ACP]. The protein operates within glycolipid biosynthesis; lipid IV(A) biosynthesis; lipid IV(A) from (3R)-3-hydroxytetradecanoyl-[acyl-carrier-protein] and UDP-N-acetyl-alpha-D-glucosamine: step 1/6. Involved in the biosynthesis of lipid A, a phosphorylated glycolipid that anchors the lipopolysaccharide to the outer membrane of the cell. The sequence is that of Acyl-[acyl-carrier-protein]--UDP-N-acetylglucosamine O-acyltransferase from Methylobacterium radiotolerans (strain ATCC 27329 / DSM 1819 / JCM 2831 / NBRC 15690 / NCIMB 10815 / 0-1).